The following is a 581-amino-acid chain: Protein LYRIC (581 aa).

At 1–49 (MAARSWQDELAQQAEEGSARLRELLSVGLGFLRTELGLDLGLEPKRYPS) the chain is on the lumenal side. Positions 1–71 (MAARSWQDEL…LLLFLLGYGW (71 aa)) are activation of NF-kappa-B. A helical transmembrane segment spans residues 50-70 (WVILVGTGALGLLLLFLLGYG). At 71–581 (WAAACAGARK…KKKKKARRET (511 aa)) the chain is on the cytoplasmic side. Residues 72 to 168 (AAACAGARKK…EKSKKNKKKS (97 aa)) form an interaction with BCCIP region. Residues 77 to 221 (GARKKRRSPP…DSGSLDSTIP (145 aa)) are disordered. The interval 100–204 (EDPAQLKNLR…ISHREKRQQR (105 aa)) is interaction with RELA. Residues 108–126 (LRSEEQKKKNRKKLPEKPK) show a composition bias toward basic and acidic residues. Thr-142 is modified (phosphothreonine). Over residues 159-168 (EKSKKNKKKS) the composition is skewed to basic residues. Ser-179 bears the Phosphoserine mark. Positions 197-207 (HREKRQQRKRD) are enriched in basic residues. Phosphoserine is present on residues Ser-215 and Ser-250. An N6-acetyllysine modification is found at Lys-263. The disordered stretch occupies residues 280–581 (VNGGGWSEKS…KKKKKARRET (302 aa)). 3 positions are modified to phosphoserine: Ser-297, Ser-305, and Ser-310. Positions 318 to 331 (QSAWTQDPGDTNAN) are enriched in polar residues. 2 positions are modified to phosphoserine: Ser-343 and Ser-368. Composition is skewed to polar residues over residues 353–371 (EPVS…SRNQ) and 382–393 (NGLSSADPSSDW). Positions 380 to 442 (GLNGLSSADP…EGALPTGKSK (63 aa)) are lung-homing for mammary tumors. Residues Ser-414 and Ser-425 each carry the phosphoserine modification. The span at 421–433 (DQKDSDDDKEKGE) shows a compositional bias: basic and acidic residues. Over residues 440–450 (KSKKKKKKKKK) the composition is skewed to basic residues. Ser-456, Ser-477, Ser-493, and Ser-495 each carry phosphoserine. 2 stretches are compositionally biased toward polar residues: residues 519 to 535 (PSVT…SSQV) and 548 to 567 (NAKQ…NWES). Ser-567 carries the phosphoserine modification. Basic residues predominate over residues 570-581 (QIKKKKKARRET).

In terms of assembly, interacts with BCCIP, CREBBP/CBP and RELA/p65. As to expression, widely expressed, with highest levels in liver, kidney, prostate and small intestine. Not detected in endothelial cells.

It localises to the endoplasmic reticulum membrane. The protein localises to the nucleus membrane. Its subcellular location is the cell junction. The protein resides in the tight junction. It is found in the nucleus. It localises to the nucleolus. The protein localises to the cytoplasm. Its subcellular location is the perinuclear region. Functionally, down-regulates SLC1A2/EAAT2 promoter activity when expressed ectopically. Activates the nuclear factor kappa-B (NF-kappa-B) transcription factor. Promotes anchorage-independent growth of immortalized melanocytes and astrocytes which is a key component in tumor cell expansion. Promotes lung metastasis and also has an effect on bone and brain metastasis, possibly by enhancing the seeding of tumor cells to the target organ endothelium. Induces chemoresistance. The sequence is that of Protein LYRIC (Mtdh) from Rattus norvegicus (Rat).